Here is a 39-residue protein sequence, read N- to C-terminus: Photosystem II reaction center protein L (39 aa).

The chain crosses the membrane as a helical span at residues 18 to 38 (SLYLGLLLVAVLGILFSSYFF).

Belongs to the PsbL family. As to quaternary structure, PSII is composed of 1 copy each of membrane proteins PsbA, PsbB, PsbC, PsbD, PsbE, PsbF, PsbH, PsbI, PsbJ, PsbK, PsbL, PsbM, PsbT, PsbX, PsbY, PsbZ, Psb30/Ycf12, peripheral proteins PsbO, CyanoQ (PsbQ), PsbU, PsbV and a large number of cofactors. It forms dimeric complexes.

The protein resides in the cellular thylakoid membrane. In terms of biological role, one of the components of the core complex of photosystem II (PSII). PSII is a light-driven water:plastoquinone oxidoreductase that uses light energy to abstract electrons from H(2)O, generating O(2) and a proton gradient subsequently used for ATP formation. It consists of a core antenna complex that captures photons, and an electron transfer chain that converts photonic excitation into a charge separation. This subunit is found at the monomer-monomer interface and is required for correct PSII assembly and/or dimerization. The sequence is that of Photosystem II reaction center protein L from Rippkaea orientalis (strain PCC 8801 / RF-1) (Cyanothece sp. (strain PCC 8801)).